A 322-amino-acid polypeptide reads, in one-letter code: Methionyl-tRNA formyltransferase (322 aa).

115-118 (SLLP) lines the (6S)-5,6,7,8-tetrahydrofolate pocket.

Belongs to the Fmt family.

It catalyses the reaction L-methionyl-tRNA(fMet) + (6R)-10-formyltetrahydrofolate = N-formyl-L-methionyl-tRNA(fMet) + (6S)-5,6,7,8-tetrahydrofolate + H(+). Attaches a formyl group to the free amino group of methionyl-tRNA(fMet). The formyl group appears to play a dual role in the initiator identity of N-formylmethionyl-tRNA by promoting its recognition by IF2 and preventing the misappropriation of this tRNA by the elongation apparatus. This chain is Methionyl-tRNA formyltransferase, found in Treponema denticola (strain ATCC 35405 / DSM 14222 / CIP 103919 / JCM 8153 / KCTC 15104).